Reading from the N-terminus, the 208-residue chain is MHDPVDTYMNLVPMVVEQTSRGERAYDIFSRLLKERIVFVNGPVHDGMSQLVVAQLLHLEAENPSKEISMYINSPGGVVTSGLSIYDTMQYIKPKVSTLVVGQAASMGSLLLTAGEKGMRFSLPNSRIMVHQPSGGYQGQATDIMIHAQETQKLKDRLNQIYVKHTGQPLKKVVDALERDNFMDAEQAKEWGLIDEIVESRANEDTSK.

The Nucleophile role is filled by serine 106. The active site involves histidine 131.

This sequence belongs to the peptidase S14 family. As to quaternary structure, fourteen ClpP subunits assemble into 2 heptameric rings which stack back to back to give a disk-like structure with a central cavity, resembling the structure of eukaryotic proteasomes.

The protein localises to the cytoplasm. The enzyme catalyses Hydrolysis of proteins to small peptides in the presence of ATP and magnesium. alpha-casein is the usual test substrate. In the absence of ATP, only oligopeptides shorter than five residues are hydrolyzed (such as succinyl-Leu-Tyr-|-NHMec, and Leu-Tyr-Leu-|-Tyr-Trp, in which cleavage of the -Tyr-|-Leu- and -Tyr-|-Trp bonds also occurs).. Its function is as follows. Cleaves peptides in various proteins in a process that requires ATP hydrolysis. Has a chymotrypsin-like activity. Plays a major role in the degradation of misfolded proteins. In Dinoroseobacter shibae (strain DSM 16493 / NCIMB 14021 / DFL 12), this protein is ATP-dependent Clp protease proteolytic subunit.